Here is a 1360-residue protein sequence, read N- to C-terminus: MAYSFTEKKRIRNNFGSRESILTEPDLLAIQIDSFNSFIQKDSKTKQDIGLHAVFQSVFPITAVNGYAQIEYVDYELQEPKFNVEECKLRGVTFASTLRVKLSLVLFDKNGSTLKKKRKIKQIIEEDIYLGQLPLMTETGTFVINGTERVVVSQLHRSPGVIFEHDKGKTHSSGKILFSSRIIPYRGSWLDFEYDHHEHLYVRIDRRRKLPVTTLLRAMGLSSEGILETFFEKTTIKLKAKSCDLNMVPIRLQRTIAEFDIVANQDVIVEKGRRITAKHVKLLKKVGIKSINVPLEYLLDKVISADIFDKDTGEILISANTIILEEVLELLNINKIKKIEILYINASETGAYISDTLRLDETQTEIEARMSIYHVMRPGEPATEDAVNLLFNNLFFKNDRYDLSKVGRMKLNRRLGIGSETGEHVLTNDDIISVIKLLINIKDGNDSVDDVDTLANRRVRAIGEMIENQFRVGLVRVEKVVREGLNLAETDELTPQDLINSKPVSAAVREFFGSSQLSQFMDQVNPLSGVTHKRRISALGPGGLTRERAGFEVRDVHPSHYGRLCPIETPEGPNIGLINTLAVYAKTNSYGFLETPYQVVKNGKVTKEVVYVSAIDEITHTIAQVNAIVNDKGKLMSDLISCRHKNEFVLVNSSKVTLIDIDSKQIASVAASLIPFLEHDDANRALMGSNMQRQAVPVLKAEKPLVGTGIERVVATDSRVCVTAKHSGVVEAVDASRIVIRVDSKKTKASELGVDIYNLTKYSRSNQNTCINQKPLVKTGDKISAADVLADGPSTDMGELALGQNMKIAFMPWNGYNFEDSILISEKVIQEDRYTTIHIEELTAYSRDTKLGPEEITADIPNVSELALAKLDEVGVVYVGARVKGGDILVGKVTPKSETVLSPEEKLLRAIFGEKANNVKDSSLRVGASKSGVVIDVQIFTRDRVEKDDRALSIDAERLERIKKDIDDEFGIIDGDIFRRVRLKLSGNMLSKVAGDIKAGEKLSAKLMKKLDNKDISKLKVEDAAVNKEVAALIKQAKAKQIEFKKFFEEEKAKINEGAELPPGVMKMVKVYVATSKTLQVGDKMAGRHGNKGVISRVSPVEDMPYLVDGSTIDVVLNPLGVPSRMNVGQVLEVHLGYAAKGLGYKITAMLDEKRTDMVKQIRDFLDEVYNSYGKQENLASFSDEEIIELASNLREGVPMATPVFDGIKEKDIKSLLKLADLPESGQEQLYDGRTGEPFDRHVTVGYMHMLKLNHLVNDKMHARSTGPYSLVTQQPLSGKAQFGGQRFGEMEVWALEAYGAAHTLREMLTVKSDDVGGRAKMYKSIVDGKNLTESIMPESFNVLVKEIRSLGIDVELEQH.

The protein belongs to the RNA polymerase beta chain family. In terms of assembly, the RNAP catalytic core consists of 2 alpha, 1 beta, 1 beta' and 1 omega subunit. When a sigma factor is associated with the core the holoenzyme is formed, which can initiate transcription.

It carries out the reaction RNA(n) + a ribonucleoside 5'-triphosphate = RNA(n+1) + diphosphate. Functionally, DNA-dependent RNA polymerase catalyzes the transcription of DNA into RNA using the four ribonucleoside triphosphates as substrates. The sequence is that of DNA-directed RNA polymerase subunit beta from Ruthia magnifica subsp. Calyptogena magnifica.